Reading from the N-terminus, the 359-residue chain is ELAV-like protein 2 (359 aa).

Residues 1–33 (METQLSNGPTCNNTANGPTTINNNCSSPVDSGN) are disordered. RRM domains follow at residues 39–117 (TNLI…YARP) and 125–205 (ANLY…FANN). At Ser-221 the chain carries Phosphoserine. The 79-residue stretch at 276–354 (WCIFVYNLAP…RVLQVSFKTN (79 aa)) folds into the RRM 3 domain.

Belongs to the RRM elav family. Interacts with IGF2BP1. Interacts with MAP1B light chain LC1.

In terms of biological role, RNA-binding protein that binds to the 3' untranslated region (3'UTR) of target mRNAs. Seems to recognize a GAAA motif. Can bind to its own 3'UTR, the FOS 3'UTR and the ID 3'UTR. This is ELAV-like protein 2 (ELAVL2) from Pongo abelii (Sumatran orangutan).